We begin with the raw amino-acid sequence, 273 residues long: Imidazole glycerol phosphate synthase subunit HisF (273 aa).

Residues Asp-11 and Asp-134 contribute to the active site.

The protein belongs to the HisA/HisF family. In terms of assembly, heterodimer of HisH and HisF.

It localises to the cytoplasm. It carries out the reaction 5-[(5-phospho-1-deoxy-D-ribulos-1-ylimino)methylamino]-1-(5-phospho-beta-D-ribosyl)imidazole-4-carboxamide + L-glutamine = D-erythro-1-(imidazol-4-yl)glycerol 3-phosphate + 5-amino-1-(5-phospho-beta-D-ribosyl)imidazole-4-carboxamide + L-glutamate + H(+). Its pathway is amino-acid biosynthesis; L-histidine biosynthesis; L-histidine from 5-phospho-alpha-D-ribose 1-diphosphate: step 5/9. IGPS catalyzes the conversion of PRFAR and glutamine to IGP, AICAR and glutamate. The HisF subunit catalyzes the cyclization activity that produces IGP and AICAR from PRFAR using the ammonia provided by the HisH subunit. The sequence is that of Imidazole glycerol phosphate synthase subunit HisF from Methanocella arvoryzae (strain DSM 22066 / NBRC 105507 / MRE50).